A 124-amino-acid chain; its full sequence is Large ribosomal subunit protein uL18 (124 aa).

Belongs to the universal ribosomal protein uL18 family. In terms of assembly, part of the 50S ribosomal subunit; part of the 5S rRNA/L5/L18/L25 subcomplex. Contacts the 5S and 23S rRNAs.

In terms of biological role, this is one of the proteins that bind and probably mediate the attachment of the 5S RNA into the large ribosomal subunit, where it forms part of the central protuberance. The protein is Large ribosomal subunit protein uL18 of Parafrankia sp. (strain EAN1pec).